We begin with the raw amino-acid sequence, 396 residues long: Methylthioribose kinase (396 aa).

ATP contacts are provided by residues Asn44, Lys61, and 115–117; that span reads EDL. A substrate-binding site is contributed by Asp233. 250-252 lines the ATP pocket; it reads DPE. Arg340 provides a ligand contact to substrate.

This sequence belongs to the methylthioribose kinase family. As to quaternary structure, homodimer.

The enzyme catalyses 5-(methylsulfanyl)-D-ribose + ATP = 5-(methylsulfanyl)-alpha-D-ribose 1-phosphate + ADP + H(+). Its pathway is amino-acid biosynthesis; L-methionine biosynthesis via salvage pathway; S-methyl-5-thio-alpha-D-ribose 1-phosphate from S-methyl-5'-thioadenosine (hydrolase route): step 2/2. Its function is as follows. Catalyzes the phosphorylation of methylthioribose into methylthioribose-1-phosphate. The chain is Methylthioribose kinase from Geobacillus kaustophilus (strain HTA426).